Reading from the N-terminus, the 227-residue chain is Atypical response regulator protein ChxR (227 aa).

In terms of domain architecture, Response regulatory spans histidine 6–leucine 108. The ompR/PhoB-type DNA-binding region spans proline 117 to aspartate 213.

Homodimer.

In terms of biological role, may be a global positive regulator of transcription. Binds a cis-acting element of its own promoter DNA sequence and is hence probably also involved in its own transcription activation. The recognition sequence is 5'-WHGAWNH-N(3-5)-WHGAWNH-3', where W is A/T, H is C/A/T, N is G/C/A/T and the linker length in the middle is 3 to 5 nucleotides. This is Atypical response regulator protein ChxR from Chlamydia trachomatis serovar L2 (strain ATCC VR-902B / DSM 19102 / 434/Bu).